Here is a 183-residue protein sequence, read N- to C-terminus: uncharacterized protein (183 aa).

The protein to A.muscaria DOPA 4,5-dioxygenase.

This is an uncharacterized protein from Botryotinia fuckeliana (Noble rot fungus).